Reading from the N-terminus, the 465-residue chain is Protein unc-93 homolog A (465 aa).

5 helical membrane passes run 8 to 28 (VLVV…LQSL), 40 to 60 (VISL…LPPI), 71 to 91 (IVVS…PGWA), 96 to 118 (TSAI…LTIS), and 140 to 160 (IFFF…SLIF). Asparagine 183 and asparagine 189 each carry an N-linked (GlcNAc...) asparagine glycan. The helical transmembrane segment at 200-220 (TLLGCYIGVGLLAIIFVAVFL) threads the bilayer. The N-linked (GlcNAc...) asparagine glycan is linked to asparagine 237. 5 consecutive transmembrane segments (helical) span residues 256-276 (LLLL…LSGE), 281-301 (YVTC…FAAS), 319-339 (IALF…LLYW), 343-363 (PDQL…DAVW), and 410-427 (IYIA…YLYV).

Belongs to the unc-93 family.

The protein localises to the membrane. This Danio rerio (Zebrafish) protein is Protein unc-93 homolog A (unc93a).